We begin with the raw amino-acid sequence, 745 residues long: Cytoskeleton-associated protein 2-like (745 aa).

The segment at 25–141 is disordered; that stretch reads AKGKLKSQNT…GELSRKPVGS (117 aa). Polar residues predominate over residues 30-61; the sequence is KSQNTKPYLKSKNNCQNQPPSKSTIRPKNDVT. Residues 109–120 show a composition bias toward low complexity; sequence SSNPYSKPSSKS. Polar residues predominate over residues 121–133; the sequence is FQQCEAGSSTTGE. Positions 185 to 187 match the KEN box motif; it reads KEN. Residues 192–203 show a composition bias toward basic and acidic residues; sequence LTEPERKPDPKL. Disordered stretches follow at residues 192-217, 256-276, and 385-411; these read LTEP…YNQT, VKSQ…KPSR, and RFNS…NNGF. A Glycyl lysine isopeptide (Lys-Gly) (interchain with G-Cter in SUMO1); alternate cross-link involves residue K198. K198 is covalently cross-linked (Glycyl lysine isopeptide (Lys-Gly) (interchain with G-Cter in SUMO2); alternate). Position 204 is a phosphotyrosine (Y204). Residues 389 to 411 show a composition bias toward polar residues; that stretch reads AIPSTPSIRPNGTSGNKHNNNGF. Residue T742 is modified to Phosphothreonine. S745 is modified (phosphoserine).

The protein belongs to the CKAP2 family. Post-translationally, ubiquitinated by the anaphase promoting complex/cyclosome (APC/C).

It localises to the cytoplasm. The protein resides in the cytoskeleton. The protein localises to the spindle pole. In terms of biological role, microtubule-associated protein required for mitotic spindle formation and cell-cycle progression in neural progenitor cells. This is Cytoskeleton-associated protein 2-like (CKAP2L) from Homo sapiens (Human).